Here is a 999-residue protein sequence, read N- to C-terminus: Desmoglein-3 (999 aa).

A signal peptide spans 1–23; the sequence is MMGLFPRTTGALAIFVVVILVHG. A propeptide spanning residues 24 to 49 is cleaved from the precursor; it reads ELRIETKGQYDEEEMTMQQAKRRQKR. 4 consecutive Cadherin domains span residues 50-158, 159-268, 269-383, and 386-499; these read EWVK…PVFS, QQIF…PMFR, DSQY…GIAF, and ASKT…VLEK. Over 50–615 the chain is Extracellular; the sequence is EWVKFAKPCR…TRYGRPHSGR (566 aa). 2 N-linked (GlcNAc...) asparagine glycosylation sites follow: N110 and N180. Residues N459 and N545 are each glycosylated (N-linked (GlcNAc...) asparagine). A helical transmembrane segment spans residues 616–640; sequence LGPAAIGLLLLGLLLLLLAPLLLLT. Topologically, residues 641–999 are cytoplasmic; the sequence is CDCGAGSTGG…CTEDPCSRLI (359 aa). The segment at 642 to 714 is required for interaction with CTNND1 and localization at cell-cell junctions; the sequence is DCGAGSTGGV…NTYARGTAVE (73 aa). Desmoglein repeat repeat units lie at residues 910–935 and 936–966; these read LSTS…LVTE and TYSA…ERVI.

In terms of assembly, homodimer. Part of a complex that contains DSG3, PKP1, YAP1 and YWHAG; the complex is required for localization of DSG3 and YAP1 to the cell membrane in keratinocytes. Interacts with PKP2. Interacts with CTNND1; the interaction facilitates DSG3 localization and retention at cell-cell junctions. Interacts with CDH1; the interaction is required for CDH1 localization to developing adherens junctions. Interacts with RAC1; the interaction is required for DSG3 translocation to cell-cell junctions, organization of cortical F-actin bundles and actin anchoring at cell-cell junctions. Interacts with DSC3; the interaction may limit the interaction of DSC3 with p38MAPK family members and therefore repress p38MAPK signaling activation. As to expression, expressed throughout the basal and spinous layer of the epidermis with weak expression in the granular layer (at protein level). Expressed in skin and mucosa (at protein level). Expressed in the basal layer of the outer root sheath of the telogen hair club, specifically at the cell membrane between the apex of the cells and the surrounding hair club (at protein level). Expression is less abundant between the lateral margins of the outer root sheath basal cells (at protein level). Also expressed in the tongue, tonsil and esophagus.

The protein localises to the cell membrane. It localises to the cell junction. It is found in the desmosome. The protein resides in the cytoplasm. Its subcellular location is the tight junction. Functionally, a component of desmosome cell-cell junctions which are required for positive regulation of cellular adhesion. Required for adherens and desmosome junction assembly in response to mechanical force in keratinocytes. Required for desmosome-mediated cell-cell adhesion of cells surrounding the telogen hair club and the basal layer of the outer root sheath epithelium, consequently is essential for the anchoring of telogen hairs in the hair follicle. Required for the maintenance of the epithelial barrier via promoting desmosome-mediated intercellular attachment of suprabasal epithelium to basal cells. May play a role in the protein stability of the desmosome plaque components DSP, JUP, PKP1, PKP2 and PKP3. Required for YAP1 localization at the plasma membrane in keratinocytes in response to mechanical strain, via the formation of an interaction complex composed of DSG3, PKP1 and YWHAG. May also be involved in the positive regulation of YAP1 target gene transcription and as a result cell proliferation. Positively regulates cellular contractility and cell junction formation via organization of cortical F-actin bundles and anchoring of actin to tight junctions, in conjunction with RAC1. The cytoplasmic pool of DSG3 is required for the localization of CDH1 and CTNNB1 at developing adherens junctions, potentially via modulation of SRC activity. Inhibits keratinocyte migration via suppression of p38MAPK signaling, may therefore play a role in moderating wound healing. In Homo sapiens (Human), this protein is Desmoglein-3.